The chain runs to 358 residues: 3-dehydroquinate synthase (358 aa).

Residues 70 to 75, 104 to 108, 128 to 129, lysine 141, lysine 150, and 168 to 171 each bind NAD(+); these read DGEKFK, GVVGD, TT, and CLQT. The Zn(2+) site is built by glutamate 183, histidine 246, and histidine 263.

This sequence belongs to the sugar phosphate cyclases superfamily. Dehydroquinate synthase family. The cofactor is Co(2+). Zn(2+) serves as cofactor. Requires NAD(+) as cofactor.

It is found in the cytoplasm. The enzyme catalyses 7-phospho-2-dehydro-3-deoxy-D-arabino-heptonate = 3-dehydroquinate + phosphate. It participates in metabolic intermediate biosynthesis; chorismate biosynthesis; chorismate from D-erythrose 4-phosphate and phosphoenolpyruvate: step 2/7. Catalyzes the conversion of 3-deoxy-D-arabino-heptulosonate 7-phosphate (DAHP) to dehydroquinate (DHQ). The protein is 3-dehydroquinate synthase of Shewanella frigidimarina (strain NCIMB 400).